Consider the following 207-residue polypeptide: Small ribosomal subunit protein uS4 (207 aa).

Residues 31–52 (KAKFDSKPGQHGRTSGARTSDY) are disordered. In terms of domain architecture, S4 RNA-binding spans 97-157 (CRLDNVVYRM…DKSKKQARIV (61 aa)).

Belongs to the universal ribosomal protein uS4 family. As to quaternary structure, part of the 30S ribosomal subunit. Contacts protein S5. The interaction surface between S4 and S5 is involved in control of translational fidelity.

In terms of biological role, one of the primary rRNA binding proteins, it binds directly to 16S rRNA where it nucleates assembly of the body of the 30S subunit. With S5 and S12 plays an important role in translational accuracy. The protein is Small ribosomal subunit protein uS4 of Acidovorax sp. (strain JS42).